The following is a 136-amino-acid chain: Salivary protein 15 Iric-2 (136 aa).

The N-terminal stretch at 1-22 is a signal peptide; it reads MESFVAMKVVCIVLLFVIAAEA. A glycan (N-linked (GlcNAc...) asparagine) is linked at asparagine 105. The segment at 117–136 is CD4-binding; that stretch reads GPKNQTCENKDQCVPHIPGC.

Belongs to the salp15 family. As to quaternary structure, interacts with host CD4. Interacts with host DC-SIGN (CD209). Interacts with Borrelia outer surface protein C (OspC). Expressed in salivary glands. Detected in fed adult female.

Its subcellular location is the secreted. Salivary tick protein that downregulates host immune system by binding to both dendritic cells, and CD4(+) T cells. Specifically binds to the CD4 coreceptor on T cells. This interaction prevents the activation of the Src kinase, Lck, and its downstream substrate Zap-70, and results in deficient activation of PLCgamma1, the repression of calcium fluxes triggered by T-cell antigen receptor (TCR) ligation, and a subsequent reduction in interleukin-2 production. This salivary protein also binds to DC-SIGN (CD209) on dendritic cells (DC) and activates the Raf-1 kinase/MEK signaling pathway that results in down-regulating expression of pro-inflammatory cytokines. Furthermore, it inhibits T cell proliferation induced by DCs. In addition, it inhibits in vitro keratinocyte inflammation induced by Borrelia burgdorferi or by the major outer surface protein (OspC) of Borrelia. In addition, it downregulates chemokines and monocyte chemoattractant protein 1, as well as several antimicrobial peptides such as defensins, cathelicidin, psoriasin, and RNase 7. Apart from its immunomodulatory activities, it is also associated with protection of Borrelia spirochetes from antibody-mediated killing through its binding to OspC. In vivo, tests on different immune disease animal models show promising therapeutic results, e.g., in inhibiting HIV infection, experimental autoimmune encephalomyelitis, transplantation rejection, and asthma. The protein is Salivary protein 15 Iric-2 of Ixodes ricinus (Common tick).